We begin with the raw amino-acid sequence, 1019 residues long: Probable LRR receptor-like serine/threonine-protein kinase At1g29720 (1019 aa).

The N-terminal stretch at 1–19 is a signal peptide; the sequence is MSIILWSFFLFFTIILSSL. Over 20–615 the chain is Extracellular; it reads TNITTLASFS…EKTKHHIKYP (596 aa). N-linked (GlcNAc...) asparagine glycosylation is found at Asn21, Asn79, and Asn90. 13 LRR repeats span residues 93-117, 118-141, 143-165, 166-189, 190-212, 214-236, 237-261, 263-283, 284-307, 308-330, 332-351, 352-374, and 375-398; these read ICRITELALKTMSLRGKLPPELTKL, PYLKSIELCRNYLSGTIPMEWAKM, YLTSISVCANNLSGNLPAGLQNF, KNLTFLGVEGNQFSGPIPDELGNL, TSLTGLELASNKFTGILPGTLAR, VNLERVRICDNNFTGIIPAYIGN, WTRLQKLHLYASGLTGPIPDAVVRL, NLLELSLSDTTGIKSFPNLSS, KGLKRLILRNVGLSGPIPSYIWNL, TDLKILDLSFNKLNGIVQGVQNP, KNIYLTGNLLSGNIESGGLL, NSQSYIDLSYNNFSWSSSCQKGS, and TINTYQSSYSKNNLTGLPPCAVPA. Residues Asn153, Asn167, and Asn188 are each glycosylated (N-linked (GlcNAc...) asparagine). Asn225 and Asn236 each carry an N-linked (GlcNAc...) asparagine glycan. Residues Asn280 and Asn306 are each glycosylated (N-linked (GlcNAc...) asparagine). N-linked (GlcNAc...) asparagine glycans are attached at residues Asn363, Asn387, Asn469, and Asn558. The helical transmembrane segment at 616–636 threads the bilayer; sequence LILGASGALVTIVLLAVGIYA. Over 637–1019 the chain is Cytoplasmic; the sequence is RGIYRRDNNR…STVENSSSSL (383 aa). One can recognise a Protein kinase domain in the interval 673-946; the sequence is FDQANKLGEG…EAVKMLEGEI (274 aa). ATP is bound by residues 679-687 and Lys701; that span reads LGEGGFGSV. Residue Tyr746 is modified to Phosphotyrosine. The active-site Proton acceptor is the Asp797. The residue at position 830 (Ser830) is a Phosphoserine. Phosphothreonine occurs at positions 831 and 836. At Tyr844 the chain carries Phosphotyrosine.

It belongs to the protein kinase superfamily. Ser/Thr protein kinase family.

The protein resides in the cell membrane. The catalysed reaction is L-seryl-[protein] + ATP = O-phospho-L-seryl-[protein] + ADP + H(+). It carries out the reaction L-threonyl-[protein] + ATP = O-phospho-L-threonyl-[protein] + ADP + H(+). The chain is Probable LRR receptor-like serine/threonine-protein kinase At1g29720 (RFK1) from Arabidopsis thaliana (Mouse-ear cress).